Reading from the N-terminus, the 749-residue chain is Taperin (749 aa).

Residues 144–348 (PAAPCRRGSP…IRPSSKPDME (205 aa)) are disordered. 3 stretches are compositionally biased toward polar residues: residues 169–179 (SAATRTPTNRS), 230–239 (LQKTGSNSFT), and 250–266 (VNRS…SPTG). Residue Ser-274 is modified to Phosphoserine. Polar residues predominate over residues 323–335 (QRQWVSSATSAND). Residues 337–347 (FEIRPSSKPDM) show a composition bias toward basic and acidic residues. Phosphoserine is present on residues Ser-401, Ser-457, and Ser-501. Disordered regions lie at residues 502–586 (EEEA…TTLE), 636–673 (FEYP…SEKP), and 730–749 (LTPA…ALYF). 2 stretches are compositionally biased toward polar residues: residues 534–544 (ELLNRGSNTFT) and 558–570 (HLSQ…QQGA). Positions 647-668 (EEAEEEEEEEGEEDGEEEEVGP) are enriched in acidic residues.

It belongs to the taperin family. In terms of assembly, interacts with GRXCR2; the interaction restricts TPRN to the stereocilum basal region. Interacts with actin ACTB; the interaction may stabilize stereocilia. Interacts with CLIC5. Interacts with PTPRQ. TPRN, CLIC5 and PTPQR form concentric rings at the base of stereocilia and may form a complex. Interacts with phosphatase PPP1CA; the interaction results in inhibition of PPP1CA phosphatase activity. Interacts with DNA damage response proteins XRCC6/KU70, XRCC5/KU80, PARP1, TOP1 and TOP2A; these interactions recruit TPRN to sites of DNA damage where it may play a role in DNA repair. In terms of tissue distribution, in the organ of Corti, expressed in the inner ear hair cell stereocilia and the supporting cells (at protein level). Expressed in the sensory epithelia of the organ of Corti and vestibular end organs and, to a lesser extent, in Reisner's membrane and the spiral ligament (at protein level). At postnatal day 2, expression is detected in cochlea, liver, brain, kidney, heart and lung.

Its subcellular location is the cell projection. The protein resides in the stereocilium. It is found in the microvillus. The protein localises to the nucleus. It localises to the nucleoplasm. Its subcellular location is the cytoplasm. Essential for hearing. Required for maintenance of stereocilia on both inner and outer hair cells. Necessary for the integrity of the stereociliary rootlet. May act as an actin cytoskeleton regulator involved in the regulation of actin dynamics at the pointed end in hair cells. Forms rings at the base of stereocilia and binds actin filaments in the stereocilia which may stabilize the stereocilia. Acts as a strong inhibitor of PPP1CA phosphatase activity. Recruited to sites of DNA damage and may play a role in DNA damage repair. This Mus musculus (Mouse) protein is Taperin (Tprn).